Consider the following 385-residue polypeptide: 3-hydroxyisobutyryl-CoA hydrolase, mitochondrial (385 aa).

Substrate is bound by residues Glu-120, Gly-145, Glu-168, and Asp-176.

Belongs to the enoyl-CoA hydratase/isomerase family.

The protein resides in the mitochondrion. The catalysed reaction is 3-hydroxy-2-methylpropanoyl-CoA + H2O = 3-hydroxy-2-methylpropanoate + CoA + H(+). It participates in amino-acid degradation; L-valine degradation. In terms of biological role, hydrolyzes 3-hydroxyisobutyryl-CoA (HIBYL-CoA), a saline catabolite. Has high activity toward isobutyryl-CoA. Could be an isobutyryl-CoA dehydrogenase that functions in valine catabolism. Also hydrolyzes 3-hydroxypropanoyl-CoA. The chain is 3-hydroxyisobutyryl-CoA hydrolase, mitochondrial (hibch) from Xenopus tropicalis (Western clawed frog).